Consider the following 459-residue polypeptide: Alcohol acyl transferase 1 allele GSa (459 aa).

Catalysis depends on proton acceptor residues His164 and Asn385.

The protein belongs to the plant acyltransferase family. Highly expressed in the cortex and skin of ripe fruit.

The catalysed reaction is butan-1-ol + acetyl-CoA = butyl acetate + CoA. The enzyme catalyses butan-1-ol + butanoyl-CoA = butyl butanoate + CoA. It catalyses the reaction butan-1-ol + hexanoyl-CoA = butyl hexanoate + CoA. It carries out the reaction hexan-1-ol + butanoyl-CoA = hexyl butanoate + CoA. The catalysed reaction is hexan-1-ol + acetyl-CoA = hexyl acetate + CoA. The enzyme catalyses 2-methylbutan-1-ol + butanoyl-CoA = 2-methylbutyl butanoate + CoA. It catalyses the reaction ethanol + butanoyl-CoA = ethyl butanoate + CoA. It carries out the reaction hexanoyl-CoA + ethanol = ethyl hexanoate + CoA. Its function is as follows. Involved in the biosynthesis of volatile esters which confer ripe apple fruit flavor. Alcohol acyl transferase that can use a wide range of alcohols as substrate, including 2-methylbutanol, hexanol and ethanol, to produce esters such as butyl butanoate, butyl hexanoate, hexyl butanoate, ethyl butanoate and ethyl hexanoate and, to some extent, 2-methylbutyl acetate (2MBA), butyl acetate, hexyl acetate and 2-methylbutyl butanoate (2MBB). In Malus domestica (Apple), this protein is Alcohol acyl transferase 1 allele GSa.